The sequence spans 87 residues: Small ribosomal subunit protein bS16 (87 aa).

Belongs to the bacterial ribosomal protein bS16 family.

In Ehrlichia ruminantium (strain Welgevonden), this protein is Small ribosomal subunit protein bS16.